Here is a 122-residue protein sequence, read N- to C-terminus: Large ribosomal subunit protein uL14c (122 aa).

Belongs to the universal ribosomal protein uL14 family. As to quaternary structure, part of the 50S ribosomal subunit.

It is found in the plastid. Its subcellular location is the chloroplast. Its function is as follows. Binds to 23S rRNA. The protein is Large ribosomal subunit protein uL14c of Angiopteris evecta (Mule's foot fern).